We begin with the raw amino-acid sequence, 173 residues long: NADH-ubiquinone oxidoreductase chain 6 (173 aa).

A run of 5 helical transmembrane segments spans residues 1-21 (MTYFMLFLGLCFVLGGLGVAS), 27-47 (YGVVGLVLASVVGCGWLLSLG), 48-68 (VSFVSLVLFMVYLGGMLVVFV), 87-107 (VVGYGVSFIAVLVVGVVIGGL), and 139-159 (CGVGMFLVAGWGLLLTLFVVL).

This sequence belongs to the complex I subunit 6 family.

The protein resides in the mitochondrion membrane. The enzyme catalyses a ubiquinone + NADH + 5 H(+)(in) = a ubiquinol + NAD(+) + 4 H(+)(out). In terms of biological role, core subunit of the mitochondrial membrane respiratory chain NADH dehydrogenase (Complex I) that is believed to belong to the minimal assembly required for catalysis. Complex I functions in the transfer of electrons from NADH to the respiratory chain. The immediate electron acceptor for the enzyme is believed to be ubiquinone. This Synthliboramphus hypoleucus (Guadalupe murrelet) protein is NADH-ubiquinone oxidoreductase chain 6 (MT-ND6).